Reading from the N-terminus, the 301-residue chain is uncharacterized protein (301 aa).

9 helical membrane passes run 1 to 21 (MSWIIFYTVIAALLVLDLGIV), 33 to 53 (SVLFSLFYFVIACLFGIYFYY), 72 to 92 (AMSLDNIFVISIIFQFFKIPG), 101 to 121 (FGIIGVIIFRAIMIYGGTILI), 124 to 144 (FAWLLYIFAVILIATGIKTFY), 185 to 205 (YFTPLFISLVLIEAIDLVFAI), 220 to 240 (IIYTSNIFAILGLRALFFCLA), 246 to 266 (FSYIKYSLALILIFIGFKIFI), and 270 to 290 (IAIPAYVSLIVTITLLLFGII).

This sequence belongs to the TerC family.

The protein localises to the cell membrane. This is an uncharacterized protein from Rickettsia felis (strain ATCC VR-1525 / URRWXCal2) (Rickettsia azadi).